The chain runs to 208 residues: Small ribosomal subunit protein uS4 (208 aa).

Positions 98 to 161 (TRLDNTVYRL…RKIPVIAEAQ (64 aa)) constitute an S4 RNA-binding domain.

This sequence belongs to the universal ribosomal protein uS4 family. In terms of assembly, part of the 30S ribosomal subunit. Contacts protein S5. The interaction surface between S4 and S5 is involved in control of translational fidelity.

Its function is as follows. One of the primary rRNA binding proteins, it binds directly to 16S rRNA where it nucleates assembly of the body of the 30S subunit. Functionally, with S5 and S12 plays an important role in translational accuracy. The polypeptide is Small ribosomal subunit protein uS4 (Maridesulfovibrio salexigens (strain ATCC 14822 / DSM 2638 / NCIMB 8403 / VKM B-1763) (Desulfovibrio salexigens)).